A 230-amino-acid chain; its full sequence is tRNA (guanine-N(1)-)-methyltransferase (230 aa).

Residues glycine 114 and 138–143 (IGDYVL) contribute to the S-adenosyl-L-methionine site.

This sequence belongs to the RNA methyltransferase TrmD family. As to quaternary structure, homodimer.

It localises to the cytoplasm. It carries out the reaction guanosine(37) in tRNA + S-adenosyl-L-methionine = N(1)-methylguanosine(37) in tRNA + S-adenosyl-L-homocysteine + H(+). Its function is as follows. Specifically methylates guanosine-37 in various tRNAs. This Rhodococcus jostii (strain RHA1) protein is tRNA (guanine-N(1)-)-methyltransferase.